A 402-amino-acid polypeptide reads, in one-letter code: LIM homeobox transcription factor 1-beta (402 aa).

LIM zinc-binding domains lie at 56–106 and 115–168; these read CEGC…CKQD and CSGC…CKGD. Disordered regions lie at residues 176 to 229 and 326 to 346; these read LSSV…LTTQ and PYGS…PGDH. Positions 219–278 form a DNA-binding region, homeobox; that stretch reads PKRPRTILTTQQRRAFKASFEVSSKPCRKVRETLAAETGLSVRVVQVWFQNQRAKMKKLA. A compositionally biased stretch (polar residues) spans 326–338; sequence PYGSSDPFQQGLT.

In terms of assembly, interacts with DHX9. Expressed in most tissues. Highest levels in testis, thyroid, duodenum, skeletal muscle, and pancreatic islets.

Its subcellular location is the nucleus. In terms of biological role, transcription factor involved in the regulation of podocyte-expressed genes. Essential for the specification of dorsal limb fate at both the zeugopodal and autopodal levels. This is LIM homeobox transcription factor 1-beta (LMX1B) from Homo sapiens (Human).